The primary structure comprises 391 residues: Putative penicillin-binding protein PbpX (391 aa).

The helical transmembrane segment at 21 to 40 (GKLLFGLLAVMVCITIWNAL) threads the bilayer. The tract at residues 44–76 (SEENEPSQETAAVSNTDQKKEVKKKTAKKSEEQ) is disordered. Residues 50–59 (SQETAAVSNT) show a composition bias toward polar residues.

The protein belongs to the beta-lactamase family.

Its subcellular location is the cell membrane. This is Putative penicillin-binding protein PbpX (pbpX) from Bacillus subtilis (strain 168).